Here is a 315-residue protein sequence, read N- to C-terminus: Homoserine O-succinyltransferase (315 aa).

Cysteine 142 functions as the Acyl-thioester intermediate in the catalytic mechanism. Positions 163 and 192 each coordinate substrate. Histidine 235 functions as the Proton acceptor in the catalytic mechanism. Glutamate 237 is an active-site residue. Arginine 249 contacts substrate.

It belongs to the MetA family.

Its subcellular location is the cytoplasm. It catalyses the reaction L-homoserine + succinyl-CoA = O-succinyl-L-homoserine + CoA. It functions in the pathway amino-acid biosynthesis; L-methionine biosynthesis via de novo pathway; O-succinyl-L-homoserine from L-homoserine: step 1/1. Functionally, transfers a succinyl group from succinyl-CoA to L-homoserine, forming succinyl-L-homoserine. In Shewanella piezotolerans (strain WP3 / JCM 13877), this protein is Homoserine O-succinyltransferase.